The primary structure comprises 93 residues: MSRSVKKGPALCPKLMKKVEVASATNQKSIIKTWARWSTITPLMVGLNVGVHDGRRHVPIYITENMVGHRLGEFTTTRNFRGHAKAEKVSQVK.

It belongs to the universal ribosomal protein uS19 family.

Protein S19 forms a complex with S13 that binds strongly to the 16S ribosomal RNA. This chain is Small ribosomal subunit protein uS19, found in Dehalococcoides mccartyi (strain ATCC BAA-2266 / KCTC 15142 / 195) (Dehalococcoides ethenogenes (strain 195)).